Here is a 514-residue protein sequence, read N- to C-terminus: Zinc finger and BTB domain-containing protein 2 (514 aa).

Positions 24–89 (CDCTVAIGDV…MYTGKMAPQL (66 aa)) constitute a BTB domain. Glycyl lysine isopeptide (Lys-Gly) (interchain with G-Cter in SUMO2) cross-links involve residues Lys147 and Lys154. The tract at residues 149-231 (ASAPEKLGRD…LEASSSDEQP (83 aa)) is disordered. 2 stretches are compositionally biased toward polar residues: residues 161 to 200 (PQTS…PLQT) and 222 to 231 (LEASSSDEQP). The C2H2-type 1 zinc finger occupies 254-276 (YACHLCGRRFTLRSSLREHLQIH). The residue at position 341 (Ser341) is a Phosphoserine. Lys362 is covalently cross-linked (Glycyl lysine isopeptide (Lys-Gly) (interchain with G-Cter in SUMO2)). The C2H2-type 2 zinc-finger motif lies at 363-385 (YECTICGRKFIQKSHWREHMYIH). The segment at 390 to 410 (FKCSTCDKSFCRANQAARHVC) adopts a C2H2-type 3; atypical zinc-finger fold. Residues 448-468 (YKCNLCDKTFSTPNEVVKHSC) form a C2H2-type 4; atypical zinc finger. Glycyl lysine isopeptide (Lys-Gly) (interchain with G-Cter in SUMO2) cross-links involve residues Lys465, Lys505, and Lys506.

It localises to the nucleus. In terms of biological role, may be involved in transcriptional regulation. The polypeptide is Zinc finger and BTB domain-containing protein 2 (ZBTB2) (Homo sapiens (Human)).